Here is a 487-residue protein sequence, read N- to C-terminus: Arginine ADP-riboxanase OspC3 (487 aa).

Over residues 1-14 the composition is skewed to polar residues; sequence MRVETHSPSFTNPN. The disordered stretch occupies residues 1–41; it reads MRVETHSPSFTNPNPAEACSGDPTEMGSRLSGVSRAPLPHA. NAD(+) contacts are provided by histidine 137, glutamine 138, serine 139, serine 164, asparagine 167, and threonine 168. Residue glutamate 325 is part of the active site. ANK repeat units follow at residues 368–398 and 444–473; these read DAVTAMWHAINKGKDEVVAYLLGNWQFEAKD and RGDTMLDNAVKYGNREMVAALIKHGADRNL.

This sequence belongs to the OspC family.

The protein localises to the secreted. Its subcellular location is the host cytoplasm. The catalysed reaction is L-arginyl-[protein] + NAD(+) = ADP-riboxanated L-argininyl-[protein] + nicotinamide + NH4(+) + H(+). ADP-riboxanase effector that inhibits host cell pyroptosis. Acts by mediating arginine ADP-riboxanation of host CASP4/CASP11, blocking CASP4/CASP11 autoprocessing. This prevents CASP4 activation and ability to recognize and cleave GSDMD, thereby inhibiting LPS-induced pyroptosis. ADP-riboxanation takes place in two steps: OspC3 first catalyzes ADP-ribosylation of target Arg, and then initiates a deamination to remove one N-omega group. The polypeptide is Arginine ADP-riboxanase OspC3 (Chromobacterium sp. (strain ATCC 53434 / SC 14030)).